Reading from the N-terminus, the 121-residue chain is Thioredoxin-like protein (121 aa).

Residues 2-112 enclose the Thioredoxin domain; that stretch reads VHHITSNDEL…LGAAAEKLGG (111 aa). Residues cysteine 30 and cysteine 33 are joined by a disulfide bond.

Belongs to the thioredoxin family.

Functionally, participates in various redox reactions through the reversible oxidation of its active center dithiol to a disulfide and catalyzes dithiol-disulfide exchange reactions. The sequence is that of Thioredoxin-like protein from Fusarium culmorum.